The sequence spans 210 residues: HTH-type transcriptional repressor FabR (210 aa).

Residues 10–70 (KTRRSLVEAA…TMVDESGLML (61 aa)) form the HTH tetR-type domain. The segment at residues 33–52 (SLREVAREAGIAPTSFYRHF) is a DNA-binding region (H-T-H motif).

As to quaternary structure, homodimer.

It is found in the cytoplasm. Functionally, represses the transcription of fabB, involved in unsaturated fatty acid (UFA) biosynthesis. By controlling UFA production, FabR directly influences the physical properties of the membrane bilayer. This Klebsiella pneumoniae subsp. pneumoniae (strain ATCC 700721 / MGH 78578) protein is HTH-type transcriptional repressor FabR.